The primary structure comprises 174 residues: MAQLENNSTLLVRENELKGLVSNWLIEMKLMHRPLGFDYQGVETLEVKAQNLTSVAIALYAYGFNYLRSQCAYDVSPGGDLASVYHLTKVDDNADQPQEVCIKVFVPRTKPIIPSVFWIWKTADFQERESYDMFGIYYEGHPHLKRILMPEHWIGWPLRKDYITPDFYELQDAY.

It belongs to the complex I 30 kDa subunit family. NDH is composed of at least 16 different subunits, 5 of which are encoded in the nucleus.

The protein resides in the plastid. It is found in the chloroplast thylakoid membrane. It carries out the reaction a plastoquinone + NADH + (n+1) H(+)(in) = a plastoquinol + NAD(+) + n H(+)(out). The catalysed reaction is a plastoquinone + NADPH + (n+1) H(+)(in) = a plastoquinol + NADP(+) + n H(+)(out). NDH shuttles electrons from NAD(P)H:plastoquinone, via FMN and iron-sulfur (Fe-S) centers, to quinones in the photosynthetic chain and possibly in a chloroplast respiratory chain. The immediate electron acceptor for the enzyme in this species is believed to be plastoquinone. Couples the redox reaction to proton translocation, and thus conserves the redox energy in a proton gradient. The sequence is that of NAD(P)H-quinone oxidoreductase subunit J, chloroplastic from Mesostigma viride (Green alga).